The sequence spans 196 residues: MKESIAKVYRKTGETEIKSEINLYGEGKYDIKTGIGFFDHMLNLMARHGLIDVKLEAKGDLQVDSHHTVEDVGIVLGESFKKALGDKKGIKRYGTSFVPMDEALASVSIDISGRPYIVCDFNFTVDKLGEMDTELVEEFLRALAFNAGITLHARVLYGKNNHHMIEAVFKALGRALREAVDRDEKINGVMSTKGTL.

Belongs to the imidazoleglycerol-phosphate dehydratase family.

The protein localises to the cytoplasm. The enzyme catalyses D-erythro-1-(imidazol-4-yl)glycerol 3-phosphate = 3-(imidazol-4-yl)-2-oxopropyl phosphate + H2O. It functions in the pathway amino-acid biosynthesis; L-histidine biosynthesis; L-histidine from 5-phospho-alpha-D-ribose 1-diphosphate: step 6/9. The protein is Imidazoleglycerol-phosphate dehydratase of Clostridium botulinum (strain ATCC 19397 / Type A).